We begin with the raw amino-acid sequence, 467 residues long: Argininosuccinate lyase (467 aa).

It belongs to the lyase 1 family. Argininosuccinate lyase subfamily.

It localises to the cytoplasm. It carries out the reaction 2-(N(omega)-L-arginino)succinate = fumarate + L-arginine. It functions in the pathway amino-acid biosynthesis; L-arginine biosynthesis; L-arginine from L-ornithine and carbamoyl phosphate: step 3/3. This is Argininosuccinate lyase from Sinorhizobium fredii (strain NBRC 101917 / NGR234).